The primary structure comprises 458 residues: uncharacterized protein (458 aa).

Residues 1–10 (MQAEPKKSQA) are compositionally biased toward basic and acidic residues. The disordered stretch occupies residues 1 to 20 (MQAEPKKSQAEQRAVAEPVS). The 62-residue stretch at 23-84 (VSLVGEEYEV…ARFLRADAVE (62 aa)) folds into the TRAM domain. Residues C97, C105, C108, and C193 each contribute to the [4Fe-4S] cluster site. Residues Q287, Y316, E340, and D384 each coordinate S-adenosyl-L-methionine. C411 serves as the catalytic Nucleophile.

It belongs to the class I-like SAM-binding methyltransferase superfamily. RNA M5U methyltransferase family.

This is an uncharacterized protein from Streptomyces coelicolor (strain ATCC BAA-471 / A3(2) / M145).